The following is a 262-amino-acid chain: Acyl-[acyl-carrier-protein]--UDP-N-acetylglucosamine O-acyltransferase (262 aa).

This sequence belongs to the transferase hexapeptide repeat family. LpxA subfamily. As to quaternary structure, homotrimer.

It is found in the cytoplasm. It carries out the reaction a (3R)-hydroxyacyl-[ACP] + UDP-N-acetyl-alpha-D-glucosamine = a UDP-3-O-[(3R)-3-hydroxyacyl]-N-acetyl-alpha-D-glucosamine + holo-[ACP]. It participates in glycolipid biosynthesis; lipid IV(A) biosynthesis; lipid IV(A) from (3R)-3-hydroxytetradecanoyl-[acyl-carrier-protein] and UDP-N-acetyl-alpha-D-glucosamine: step 1/6. In terms of biological role, involved in the biosynthesis of lipid A, a phosphorylated glycolipid that anchors the lipopolysaccharide to the outer membrane of the cell. This Salmonella dublin (strain CT_02021853) protein is Acyl-[acyl-carrier-protein]--UDP-N-acetylglucosamine O-acyltransferase.